A 109-amino-acid chain; its full sequence is uncharacterized protein (109 aa).

The signal sequence occupies residues 1–22 (MKPYSTLFLFTLLTLTTVPAQA). Positions 39 to 109 (AYNPDHGRDY…ERRMEDEYGQ (71 aa)) are disordered. Residues 41–109 (NPDHGRDYED…ERRMEDEYGQ (69 aa)) show a composition bias toward basic and acidic residues.

This is an uncharacterized protein from Shigella dysenteriae serotype 1 (strain Sd197).